A 621-amino-acid polypeptide reads, in one-letter code: uncharacterized protein (621 aa).

The N-terminal stretch at 1–15 (MRRSVCYVTPSVARA) is a signal peptide.

The protein belongs to the chlamydial CPn_0512/CT_425/TC_0708 family.

This is an uncharacterized protein from Chlamydia trachomatis serovar D (strain ATCC VR-885 / DSM 19411 / UW-3/Cx).